A 225-amino-acid chain; its full sequence is Membrin-11 (225 aa).

An N-acetylalanine modification is found at Ala2. Topologically, residues 2–200 (ASGIVEGGGS…VLRLIERRNR (199 aa)) are cytoplasmic. Residues 201–221 (VDTWIKYAGMIATLVILYLFI) traverse the membrane as a helical; Anchor for type IV membrane protein segment. At 222-225 (RWTR) the chain is on the vesicular side.

Belongs to the GOSR2 family.

It localises to the golgi apparatus membrane. In terms of biological role, involved in transport of proteins from the cis/medial-Golgi to the trans-Golgi network. The polypeptide is Membrin-11 (MEMB11) (Arabidopsis thaliana (Mouse-ear cress)).